The following is a 342-amino-acid chain: Dihydroorotate dehydrogenase (quinone) (342 aa).

FMN-binding positions include 61 to 65 (AGLDK) and Thr85. A substrate-binding site is contributed by Lys65. Residue 110-114 (NRMGF) participates in substrate binding. Asn138 and Asn171 together coordinate FMN. Asn171 is a binding site for substrate. Ser174 serves as the catalytic Nucleophile. Asn176 is a binding site for substrate. Residues Lys216 and Thr244 each contribute to the FMN site. 245–246 (NT) contacts substrate. Residues Gly267, Gly296, and 317-318 (YS) contribute to the FMN site.

The protein belongs to the dihydroorotate dehydrogenase family. Type 2 subfamily. As to quaternary structure, monomer. FMN is required as a cofactor.

It is found in the cell membrane. The catalysed reaction is (S)-dihydroorotate + a quinone = orotate + a quinol. The protein operates within pyrimidine metabolism; UMP biosynthesis via de novo pathway; orotate from (S)-dihydroorotate (quinone route): step 1/1. Catalyzes the conversion of dihydroorotate to orotate with quinone as electron acceptor. This is Dihydroorotate dehydrogenase (quinone) from Cellvibrio japonicus (strain Ueda107) (Pseudomonas fluorescens subsp. cellulosa).